The following is a 203-amino-acid chain: MGVRNHRLLLLRHGETAWSTLGRHTGGTEVELTDTGRTQAELAGQLLGELELDDPIVICSPRRRTLDTAKLAGLTVNEVTGLLAEWDYGSYEGLTTPQIRESEPDWLVWTHGCPAGESVAQVNDRADSAVALALEHMSSRDVLFVSHGHFSRAVITRWVQLPLAEGSRFAMPTASIGICGFEHGVRQLAVLGLTGHPQPIAAG.

The active-site Tele-phosphohistidine intermediate is the histidine 13. Glutamate 85 (proton donor/acceptor) is an active-site residue.

This sequence belongs to the phosphoglycerate mutase family. In terms of assembly, homodimer.

It carries out the reaction a phosphate monoester + H2O = an alcohol + phosphate. The catalysed reaction is beta-D-fructose 1,6-bisphosphate + H2O = beta-D-fructose 6-phosphate + phosphate. Its pathway is carbohydrate biosynthesis; gluconeogenesis. In contrast to classical FBPases, is resistant to inhibition by lithium. Its function is as follows. Phosphatase with a broad specificity. Can dephosphorylate a variety of substrates including phosphorylated sugars like fructose-6-phosphate (F6P). Is able to function in vivo as a fructose-1,6-bisphosphatase (FBPase) and to maintain gluconeogenesis when the classical FBPase GlpX is absent. Shows negligible phosphoglycerate mutase activity. Has no phosphatase activity against 3-phosphoglycerate, 2,3-bisphosphoglycerate, or hydrophobic substrates such as alpha-napthyl phosphate. This Mycobacterium tuberculosis (strain ATCC 25618 / H37Rv) protein is Acid phosphatase.